A 550-amino-acid chain; its full sequence is Vacuolar protein 8 (550 aa).

Glycine 2 is lipidated: N-myristoyl glycine. S-palmitoyl cysteine attachment occurs at residues cysteine 4 and cysteine 7. ARM repeat units follow at residues 75–114 (TEKD…NLAV), 116–155 (AENK…NLAT), 157–196 (DENK…NMTH), 198–237 (YENR…NIAV), 241–280 (HRKR…NLAS), 282–321 (ERYQ…NISI), 323–363 (PLNE…NLAA), and 454–493 (FIEC…QLLE). Threonine 548 carries the phosphothreonine modification. Serine 550 carries the post-translational modification Phosphoserine.

This sequence belongs to the beta-catenin family.

The protein resides in the golgi apparatus membrane. The protein localises to the vacuole membrane. In terms of biological role, functions in both vacuole inheritance and protein targeting from the cytoplasm to vacuole. The sequence is that of Vacuolar protein 8 (vac8) from Schizosaccharomyces pombe (strain 972 / ATCC 24843) (Fission yeast).